Reading from the N-terminus, the 405-residue chain is Low-salt glycan biosynthesis sulfotransferase Agl7 (405 aa).

The Ca(2+) site is built by Asp24, Asp201, and His202.

The protein belongs to the sulfatase family. It depends on Ca(2+) as a cofactor.

It participates in protein modification; protein glycosylation. It functions in the pathway cell surface structure biogenesis; S-layer biogenesis. Involved in N-glycan biosynthetic pathway that takes place under low-salt conditions (1.75 M instead of 3.4 M). Participates in the formation of the tetrasaccharide present at 'Asn-532' of S-layer glycoprotein Csg, consisting of a sulfated hexose, 2 hexoses and rhamnose. Mediates sulfation of sugar 1 in the tetrasaccharide. The protein is Low-salt glycan biosynthesis sulfotransferase Agl7 of Haloferax volcanii (strain ATCC 29605 / DSM 3757 / JCM 8879 / NBRC 14742 / NCIMB 2012 / VKM B-1768 / DS2) (Halobacterium volcanii).